The sequence spans 709 residues: UV-stimulated scaffold protein A (709 aa).

Residues 1 to 10 (MDQKLSKLVE) are compositionally biased toward basic and acidic residues. The disordered stretch occupies residues 1-20 (MDQKLSKLVEELTTSGEPRL). The VHS-like stretch occupies residues 2–145 (DQKLSKLVEE…HFLRHNKKVD (144 aa)). A coiled-coil region spans residues 165–199 (KHLDKIYQERASQAEREMQEMSGEIESCLTEVESC). Disordered regions lie at residues 230 to 289 (SCAG…DSDL) and 386 to 406 (EGGERRRTEALGDAEEDEDDE). Residues 280-289 (PSDEDEDSDL) show a composition bias toward acidic residues. 2 positions are modified to phosphoserine: S281 and S287. Residues 386-395 (EGGERRRTEA) are compositionally biased toward basic and acidic residues. Over residues 397–406 (GDAEEDEDDE) the composition is skewed to acidic residues. K414 is covalently cross-linked (Glycyl lysine isopeptide (Lys-Gly) (interchain with G-Cter in ubiquitin)). The tract at residues 469–495 (DHLPPPSSASPSRALPEPQEAQKLAAE) is disordered. Residues 477 to 486 (ASPSRALPEP) show a composition bias toward low complexity. The segment at 564–591 (QHWCRAPRPDGRLCERQDRLKCPFHGKI) adopts a UVSSA-type zinc-finger fold. Zn(2+) contacts are provided by C567, C577, C585, and H588. Residues 588 to 655 (HGKIVPRDDE…GKGRGKKRRY (68 aa)) form a disordered region. Over residues 592–632 (VPRDDEGRPLDPEDRAREQRRQLQKQERPEWQDPELMRDVE) the composition is skewed to basic and acidic residues. Residues 646 to 655 (GKGRGKKRRY) show a composition bias toward basic residues.

This sequence belongs to the UVSSA family. Interacts with the elongating form of RNA polymerase II (RNA pol IIo) during transcription stress. Interacts with the TFIIH complex during transcription stress. Interacts with ERCC6. Interacts with ERCC8. Interacts with USP7. In terms of processing, monoubiquitinated at Lys-414 in response to transcription stress; this promotes efficient transfer of TFIIH to stalled RNA polymerase II.

The protein localises to the chromosome. Functionally, factor involved in transcription-coupled nucleotide excision repair (TC-NER), a mechanism that rapidly removes RNA polymerase II-blocking lesions from the transcribed strand of active genes. Acts as a key adapter that promotes recruitment of factors involved in TC-NER. Facilitates the ubiquitination of the elongating form of RNA polymerase II (RNA pol IIo) at DNA damage sites, thereby promoting RNA pol IIo backtracking and access by the TC-NER machinery to lesion sites. Also promotes stabilization of ERCC6/CSB by recruiting deubiquitinating enzyme USP7 to TC-NER complexes, preventing UV-induced degradation of ERCC6 by the proteasome. Mediates the recruitment of the TFIIH complex and other factors that are required for nucleotide excision repair to RNA polymerase II. Also required to inactivate stalled RNA polymerase II by blocking the access of TCEA1/TFIIS, thereby preventing reactivation of RNA polymerase II. Not involved in processing oxidative damage. The polypeptide is UV-stimulated scaffold protein A (Homo sapiens (Human)).